The primary structure comprises 425 residues: MDNSFDILDIKAREVIDSRGNPTVEVEVLTAGGYGSAIVPSGASTGTHEAVELRDKSQRFGGKGVLVAVDNVNSIIAPELIGFDSRTQREIDTYMIELDRTANKGKLGANAILAVSMAVAKAAASTASLPLYKYIGGCNSYIMPVPMMNVINGGEHAGNALEFQEFMIMPVGADSISEAIRMCAETYHTLKKVIVSKYGKNASNVGDEGGFAPPVSDIRETLDLLTDAVKMAGYEDEITFALDCAASEFYNKDDNKYIVKGAPLSSDQLISLYKEICDEYPVISIEDPLDEEDFEGFASLTKELKGVQIVGDDLFVTNTERLKKGIEMGAGNALLLKVNQIGTLSESIDAANLAFRNGYGVVVSHRSGESEDNTIADISVALNAGQIKTGAPARGERTAKYNQLIRIEEEIGYPKYAGKNIRCPF.

Q164 lines the (2R)-2-phosphoglycerate pocket. Residue E208 is the Proton donor of the active site. Mg(2+)-binding residues include D243, E286, and D312. Residues K337, R366, S367, and K388 each contribute to the (2R)-2-phosphoglycerate site. Residue K337 is the Proton acceptor of the active site.

It belongs to the enolase family. Requires Mg(2+) as cofactor.

The protein resides in the cytoplasm. It is found in the secreted. The protein localises to the cell surface. It carries out the reaction (2R)-2-phosphoglycerate = phosphoenolpyruvate + H2O. The protein operates within carbohydrate degradation; glycolysis; pyruvate from D-glyceraldehyde 3-phosphate: step 4/5. Functionally, catalyzes the reversible conversion of 2-phosphoglycerate (2-PG) into phosphoenolpyruvate (PEP). It is essential for the degradation of carbohydrates via glycolysis. The polypeptide is Enolase (Methanococcus aeolicus (strain ATCC BAA-1280 / DSM 17508 / OCM 812 / Nankai-3)).